A 315-amino-acid polypeptide reads, in one-letter code: Protoheme IX farnesyltransferase 1 (315 aa).

9 consecutive transmembrane segments (helical) span residues P25–G45, L49–V69, R87–G107, A120–L139, S145–C165, A176–F196, L220–G240, T242–L262, and G280–I300.

Belongs to the UbiA prenyltransferase family. Protoheme IX farnesyltransferase subfamily.

The protein localises to the cell inner membrane. The catalysed reaction is heme b + (2E,6E)-farnesyl diphosphate + H2O = Fe(II)-heme o + diphosphate. Its pathway is porphyrin-containing compound metabolism; heme O biosynthesis; heme O from protoheme: step 1/1. Converts heme B (protoheme IX) to heme O by substitution of the vinyl group on carbon 2 of heme B porphyrin ring with a hydroxyethyl farnesyl side group. In Shewanella sp. (strain W3-18-1), this protein is Protoheme IX farnesyltransferase 1.